A 94-amino-acid polypeptide reads, in one-letter code: Fungal defensin scedosporisin-2 (94 aa).

The first 25 residues, 1–25, serve as a signal peptide directing secretion; the sequence is MKFSNISIAALFTILASTAMAAPAA. A propeptide spanning residues 26 to 56 is cleaved from the precursor; sequence DSPDSIVAREPAPVEETYEAPSGLEKRGFGC. Beta-D-GlcNAc-(1-&gt;4)-Mur2Ac(oyl-L-Ala-gamma-D-Glu-L-Lys-D-Ala-D-Ala)-di-trans,octa-cis-undecaprenyl diphosphate-binding residues include phenylalanine 54, glycine 55, and cysteine 56. 3 disulfides stabilise this stretch: cysteine 56–cysteine 78, cysteine 63–cysteine 91, and cysteine 67–cysteine 93. The tract at residues 57–60 is interaction site with membrane interface; sequence PGSE. Position 66 (histidine 66) interacts with beta-D-GlcNAc-(1-&gt;4)-Mur2Ac(oyl-L-Ala-gamma-D-Glu-L-Lys-D-Ala-D-Ala)-di-trans,octa-cis-undecaprenyl diphosphate. Residues 83–90 form an interaction site with membrane interface region; sequence IPFVGRPR. Cysteine 91 lines the beta-D-GlcNAc-(1-&gt;4)-Mur2Ac(oyl-L-Ala-gamma-D-Glu-L-Lys-D-Ala-D-Ala)-di-trans,octa-cis-undecaprenyl diphosphate pocket.

Belongs to the invertebrate defensin family.

It is found in the secreted. The protein resides in the target cell membrane. Antibacterial peptide potently active against Gram-positive bacteria. May act by selectively inhibiting peptidoglycan biosynthesis through complex formation with the cell wall precursor lipid II (1:1 molar ratio) thus inhibiting cell wall synthesis. Shows remarkably activity against resistant isolates such as methicillin-resistant Staphylococcus aureus (MRSA) and vancomycin-resistant Enterococci (VRE) at the concentration of micromolar level. Does not act by destroying the membrane integrity, which is consistent with its nonamphiphilic architecture. Acts more rapidly than vancomycin. Shows low hemolysis and cytotoxicity and high serum stability. In vivo, is as efficient as vancomycin to protect mouse peritonitis models from MRSA infections. The polypeptide is Fungal defensin scedosporisin-2 (Pseudallescheria apiosperma (Scedosporium apiospermum)).